A 578-amino-acid polypeptide reads, in one-letter code: G protein-coupled receptor kinase 4 (578 aa).

At Met1 the chain carries N-acetylmethionine. The interval 1–154 (MELENIVANS…ECTRVAHNYL (154 aa)) is N-terminal. The RGS domain maps to 52-172 (DYSSLCDKQP…QESSYFSQFL (121 aa)). The region spanning 187-449 (FRHYRVLGKG…AAGVKQHPVF (263 aa)) is the Protein kinase domain. ATP is bound by residues 193-201 (LGKGGFGEV) and Lys216. Catalysis depends on Asp312, which acts as the Proton acceptor. The AGC-kinase C-terminal domain occupies 450-515 (KDINFRRLEA…GCVSIPWQNE (66 aa)). Ser485 is subject to Phosphoserine.

Belongs to the protein kinase superfamily. AGC Ser/Thr protein kinase family. GPRK subfamily. In terms of assembly, interacts with DRD3. In terms of processing, palmitoylated. As to expression, isoform 1, isoform 2, isoform 3, and isoform 4 are expressed in testis. Isoform 4 is expressed in myometrium.

Its subcellular location is the cytoplasm. The protein resides in the cell cortex. The catalysed reaction is [G-protein-coupled receptor] + ATP = [G-protein-coupled receptor]-phosphate + ADP + H(+). Inhibited by heparin. In terms of biological role, specifically phosphorylates the activated forms of G protein-coupled receptors. GRK4-alpha can phosphorylate rhodopsin and its activity is inhibited by calmodulin; the other three isoforms do not phosphorylate rhodopsin and do not interact with calmodulin. GRK4-alpha and GRK4-gamma phosphorylate DRD3. Phosphorylates ADRB2. This Homo sapiens (Human) protein is G protein-coupled receptor kinase 4 (GRK4).